The sequence spans 579 residues: Acyl-coenzyme A synthetase ACSM5, mitochondrial (579 aa).

The N-terminal 26 residues, Met1–Pro26, are a transit peptide targeting the mitochondrion. Lys97 carries the N6-acetyllysine; alternate modification. Lys97 carries the N6-succinyllysine; alternate modification. At Lys152 the chain carries N6-acetyllysine. Thr230 to Lys238 lines the ATP pocket. Lys303 bears the N6-acetyllysine; alternate mark. Residue Lys303 is modified to N6-succinyllysine; alternate. ATP is bound by residues Glu368–Ser373, Asp455, Arg470, and Lys566.

It belongs to the ATP-dependent AMP-binding enzyme family. Requires Mg(2+) as cofactor. It depends on Mn(2+) as a cofactor. As to expression, detected in kidney and liver.

It localises to the mitochondrion matrix. It carries out the reaction a medium-chain fatty acid + ATP + CoA = a medium-chain fatty acyl-CoA + AMP + diphosphate. Functionally, catalyzes the activation of fatty acids by CoA to produce an acyl-CoA, the first step in fatty acid metabolism. The polypeptide is Acyl-coenzyme A synthetase ACSM5, mitochondrial (ACSM5) (Homo sapiens (Human)).